The primary structure comprises 63 residues: Large ribosomal subunit protein uL30 (63 aa).

This sequence belongs to the universal ribosomal protein uL30 family. Part of the 50S ribosomal subunit.

The chain is Large ribosomal subunit protein uL30 from Rickettsia canadensis (strain McKiel).